We begin with the raw amino-acid sequence, 148 residues long: Glutamate mutase sigma subunit (148 aa).

The B12-binding domain occupies 3-140; that stretch reads NPTIVIGVIG…KRDIERVMQS (138 aa). Adenosylcob(III)alamin contacts are provided by residues 13 to 17, histidine 16, 61 to 63, and 93 to 97; these read ADCHA, SSI, and NLVIG.

Belongs to the methylaspartate mutase GlmS subunit family. In terms of assembly, heterotetramer composed of 2 epsilon subunits (GlmE) and 2 sigma subunits (GlmS). GlmE exists as a homodimer and GlmS as a monomer. The cofactor is adenosylcob(III)alamin.

It catalyses the reaction (2S,3S)-3-methyl-L-aspartate = L-glutamate. Its pathway is amino-acid degradation; L-glutamate degradation via mesaconate pathway; acetate and pyruvate from L-glutamate: step 1/4. Its function is as follows. Catalyzes the carbon skeleton rearrangement of L-glutamate to L-threo-3-methylaspartate ((2S,3S)-3-methylaspartate). This chain is Glutamate mutase sigma subunit, found in Yersinia enterocolitica serotype O:8 / biotype 1B (strain NCTC 13174 / 8081).